We begin with the raw amino-acid sequence, 1732 residues long: Lys-gingipain W83 (1732 aa).

The signal sequence occupies residues 1–24; sequence MRKLLLLIAASLLGVGLYAQSAKI. Residues 25 to 228 constitute a propeptide that is removed on maturation; the sequence is KLDAPTTRTT…ETAYKQLFNR (204 aa). Ca(2+)-binding residues include D313, D337, D339, F341, and E343. The Proton donor role is filled by H444. C477 acts as the Nucleophile in catalysis. Positions 482 and 491 each coordinate Ca(2+). The tract at residues 965-988 is disordered; the sequence is DAPNGTPNPNPNPNPNPGTTLSES. Residues 970–980 are compositionally biased toward pro residues; it reads TPNPNPNPNPN. Positions 988, 990, 1001, 1003, 1005, 1007, 1022, 1024, 1043, 1146, 1147, 1433, 1435, 1446, 1448, 1450, 1452, 1470, 1472, 1490, and 1595 each coordinate Ca(2+).

This sequence belongs to the peptidase C25 family. Post-translationally, proteolytically cleaved into a catalytic subunit and three adhesins. Arg-gingipain is involved in this post-translational processing.

The protein resides in the secreted. The catalysed reaction is Endopeptidase with strict specificity for lysyl bonds.. Its function is as follows. Cysteine proteinase with a strong preference for substrates with Lys in the P1 position. Hydrolyzes bovine hemoglobin, bovine serum albumin, casein, human placental type I collagen and human IgA and IgG. Disrupts the functions of polymorphonuclear leukocytes. May act as a virulence factor in the development of peridontal disease. Involved in the coaggregation of P.gingivalis with other oral bacteria. Has hemolytic activity; this is mediated by the adhesin domains and does not require the catalytic domain. The protein is Lys-gingipain W83 of Porphyromonas gingivalis (Bacteroides gingivalis).